Here is a 211-residue protein sequence, read N- to C-terminus: Endo-1,4-beta-xylanase 3 (211 aa).

The signal sequence occupies residues 1-27; sequence MKVTAAFAGLLVTAFAAPVPEPVLVSR. Residues 28-210 enclose the GH11 domain; that stretch reads SAGINYVQNY…GAGSASVTIS (183 aa). The active-site Nucleophile is Glu-106. Residues Cys-119 and Cys-138 are joined by a disulfide bond. Catalysis depends on Glu-197, which acts as the Proton donor.

This sequence belongs to the glycosyl hydrolase 11 (cellulase G) family.

It localises to the secreted. It carries out the reaction Endohydrolysis of (1-&gt;4)-beta-D-xylosidic linkages in xylans.. Its pathway is glycan degradation; xylan degradation. The sequence is that of Endo-1,4-beta-xylanase 3 (xynC) from Aspergillus kawachii (strain NBRC 4308) (White koji mold).